The sequence spans 115 residues: Large ribosomal subunit protein bL19 (115 aa).

It belongs to the bacterial ribosomal protein bL19 family.

In terms of biological role, this protein is located at the 30S-50S ribosomal subunit interface and may play a role in the structure and function of the aminoacyl-tRNA binding site. This chain is Large ribosomal subunit protein bL19, found in Desulforudis audaxviator (strain MP104C).